The primary structure comprises 31 residues: Cytochrome b6-f complex subunit 6 (31 aa).

A helical membrane pass occupies residues 4–26; that stretch reads ITSYFGFLLAASTITTALFIGLS.

This sequence belongs to the PetL family. As to quaternary structure, the 4 large subunits of the cytochrome b6-f complex are cytochrome b6, subunit IV (17 kDa polypeptide, PetD), cytochrome f and the Rieske protein, while the 4 small subunits are PetG, PetL, PetM and PetN. The complex functions as a dimer.

The protein resides in the plastid. It localises to the chloroplast thylakoid membrane. Its function is as follows. Component of the cytochrome b6-f complex, which mediates electron transfer between photosystem II (PSII) and photosystem I (PSI), cyclic electron flow around PSI, and state transitions. PetL is important for photoautotrophic growth as well as for electron transfer efficiency and stability of the cytochrome b6-f complex. The protein is Cytochrome b6-f complex subunit 6 of Acorus calamus (Sweet flag).